The following is a 260-amino-acid chain: 3-methyl-2-oxobutanoate hydroxymethyltransferase (260 aa).

2 residues coordinate Mg(2+): Asp-44 and Asp-83. 3-methyl-2-oxobutanoate is bound by residues 44-45 (DS), Asp-83, and Lys-113. A Mg(2+)-binding site is contributed by Glu-115. Glu-182 functions as the Proton acceptor in the catalytic mechanism.

This sequence belongs to the PanB family. In terms of assembly, homodecamer; pentamer of dimers. It depends on Mg(2+) as a cofactor.

The protein resides in the cytoplasm. The enzyme catalyses 3-methyl-2-oxobutanoate + (6R)-5,10-methylene-5,6,7,8-tetrahydrofolate + H2O = 2-dehydropantoate + (6S)-5,6,7,8-tetrahydrofolate. Its pathway is cofactor biosynthesis; (R)-pantothenate biosynthesis; (R)-pantoate from 3-methyl-2-oxobutanoate: step 1/2. In terms of biological role, catalyzes the reversible reaction in which hydroxymethyl group from 5,10-methylenetetrahydrofolate is transferred onto alpha-ketoisovalerate to form ketopantoate. This is 3-methyl-2-oxobutanoate hydroxymethyltransferase from Synechocystis sp. (strain ATCC 27184 / PCC 6803 / Kazusa).